Consider the following 153-residue polypeptide: Actin-related protein 2/3 complex subunit 5-like protein (153 aa).

The residue at position 64 (Ser64) is a Phosphoserine.

Belongs to the ARPC5 family. In terms of assembly, may be a component of the Arp2/3 complex in which it may replace ARPC5.

It is found in the cytoplasm. The protein localises to the cytoskeleton. In terms of biological role, may function as component of the Arp2/3 complex which is involved in regulation of actin polymerization and together with an activating nucleation-promoting factor (NPF) mediates the formation of branched actin networks. The polypeptide is Actin-related protein 2/3 complex subunit 5-like protein (Arpc5l) (Rattus norvegicus (Rat)).